A 56-amino-acid chain; its full sequence is MAVPKKRTSKSKKKTRKAVWTAKADKAAVEAFSRARSVLTGRSSSFYYAANNDISK.

The protein belongs to the bacterial ribosomal protein bL32 family.

Its subcellular location is the plastid. It localises to the chloroplast. This is Large ribosomal subunit protein bL32c from Huperzia lucidula (Shining clubmoss).